An 88-amino-acid chain; its full sequence is Sec-independent protein translocase protein TatA (88 aa).

The helical transmembrane segment at 3–23 threads the bilayer; sequence IFGVGLPEVTVILILALLIFG. The interval 56 to 88 is disordered; sequence MNEQDKDESPISIESNQTNEINQEKIDSENSKK. A compositionally biased stretch (polar residues) spans 67–76; sequence SIESNQTNEI. Positions 77–88 are enriched in basic and acidic residues; sequence NQEKIDSENSKK.

This sequence belongs to the TatA/E family. Forms a complex with TatC.

The protein resides in the cell inner membrane. Part of the twin-arginine translocation (Tat) system that transports large folded proteins containing a characteristic twin-arginine motif in their signal peptide across membranes. TatA could form the protein-conducting channel of the Tat system. The polypeptide is Sec-independent protein translocase protein TatA (Prochlorococcus marinus (strain AS9601)).